The primary structure comprises 678 residues: Protein CASP (678 aa).

At 1 to 619 the chain is on the cytoplasmic side; sequence MAANVGSMSQ…LILSNKTART (619 aa). Coiled-coil stretches lie at residues 16–40, 67–374, 427–454, and 502–556; these read DLQQLQRELDAAATVLANRQDESEQ, LLKS…TLKS, HLTEATAKAVEQKELIARLEQDLSTIQS, and LSII…FLQS. Serine 586 is modified (phosphoserine). Residues 620 to 640 form a helical; Anchor for type IV membrane protein membrane-spanning segment; the sequence is IGFFYTLFLHCLVFLVLYKLA. At 641–678 the chain is on the lumenal side; it reads WSESVERDCAATCAKKFADHLHKFHESDNGAAAGDLWQ.

Belongs to the CASP family. In terms of assembly, homodimer; disulfide-linked. Interacts with GOLGA5. As to expression, ubiquitously expressed.

The protein localises to the golgi apparatus membrane. Functionally, may be involved in intra-Golgi retrograde transport. The sequence is that of Protein CASP (Cux1) from Mus musculus (Mouse).